The following is a 332-amino-acid chain: F-box/SPRY domain-containing protein 1 (332 aa).

A disordered region spans residues Met-1–Ala-82. Composition is skewed to polar residues over residues Cys-15–Leu-28 and Asn-49–Pro-64. The F-box domain occupies Glu-79–Leu-127. Residues Ser-138–Gln-330 enclose the B30.2/SPRY domain.

Belongs to the FBXO45/Fsn family. As to quaternary structure, component of an SCF (SKP1-CUL1-F-box protein) E3 ubiquitin ligase complex composed of cul-1, fsn-1, rpm-1 and skr-1. Interacts (via SPRY domain) with scd-2 (via cytoplasmic domain). Interacts (via SPRY domain) with convertase egl-3 (via C-terminus). Expressed in GABAergic neuromuscular junctions (NMJs).

Its subcellular location is the synapse. It functions in the pathway protein modification; protein ubiquitination. Component of a SCF (SKP1-CUL1-F-box protein) E3 ubiquitin ligase complex which is required for the restriction and/or maturation of synapses in GABAergic neuromuscular junction (NMJ) presynaptic neurons. Promotes NRJ synapse development and synaptic transmission by negatively regulating the daf-2/InsR pathway in muscles. By targeting convertase egl-3 for degradation, negatively modulates insulin-like protein ins-4 and ins-6 processing. May stabilize synapse formation by promoting the down-regulation of scd-2. Regulates axon termination in PLM and ALM neurons. The protein is F-box/SPRY domain-containing protein 1 (fsn-1) of Caenorhabditis elegans.